A 144-amino-acid chain; its full sequence is uncharacterized protein (144 aa).

The N-terminal stretch at M1–G23 is a signal peptide. Positions Q119 to S144 are disordered. The segment covering T127–S144 has biased composition (basic and acidic residues).

This is an uncharacterized protein from Bacillus subtilis (strain 168).